Here is a 115-residue protein sequence, read N- to C-terminus: Large ribosomal subunit protein bL19 (115 aa).

This sequence belongs to the bacterial ribosomal protein bL19 family.

Functionally, this protein is located at the 30S-50S ribosomal subunit interface and may play a role in the structure and function of the aminoacyl-tRNA binding site. This chain is Large ribosomal subunit protein bL19, found in Brevibacillus brevis (strain 47 / JCM 6285 / NBRC 100599).